The chain runs to 100 residues: Cobalt transport protein CbiN (100 aa).

A run of 2 helical transmembrane segments spans residues 8–28 and 69–89; these read LSNW…LIFV and LLFS…VGLY.

It belongs to the CbiN family. Forms an energy-coupling factor (ECF) transporter complex composed of an ATP-binding protein (A component, CbiO), a transmembrane protein (T component, CbiQ) and 2 possible substrate-capture proteins (S components, CbiM and CbiN) of unknown stoichimetry.

The protein resides in the cell inner membrane. It participates in cofactor biosynthesis; adenosylcobalamin biosynthesis. In terms of biological role, part of the energy-coupling factor (ECF) transporter complex CbiMNOQ involved in cobalt import. The sequence is that of Cobalt transport protein CbiN from Nostoc sp. (strain PCC 7120 / SAG 25.82 / UTEX 2576).